A 632-amino-acid chain; its full sequence is Phosphomethylpyrimidine synthase (632 aa).

Substrate is bound by residues N237, M266, Y295, H331, 351-353 (SRG), 392-395 (DGLR), and E431. Position 435 (H435) interacts with Zn(2+). Position 458 (Y458) interacts with substrate. H499 contacts Zn(2+). Positions 579, 582, and 587 each coordinate [4Fe-4S] cluster.

The protein belongs to the ThiC family. Homodimer. [4Fe-4S] cluster serves as cofactor.

It carries out the reaction 5-amino-1-(5-phospho-beta-D-ribosyl)imidazole + S-adenosyl-L-methionine = 4-amino-2-methyl-5-(phosphooxymethyl)pyrimidine + CO + 5'-deoxyadenosine + formate + L-methionine + 3 H(+). It functions in the pathway cofactor biosynthesis; thiamine diphosphate biosynthesis. Its function is as follows. Catalyzes the synthesis of the hydroxymethylpyrimidine phosphate (HMP-P) moiety of thiamine from aminoimidazole ribotide (AIR) in a radical S-adenosyl-L-methionine (SAM)-dependent reaction. In Chromobacterium violaceum (strain ATCC 12472 / DSM 30191 / JCM 1249 / CCUG 213 / NBRC 12614 / NCIMB 9131 / NCTC 9757 / MK), this protein is Phosphomethylpyrimidine synthase.